The following is a 440-amino-acid chain: Nuclear fusion protein BIK1 (440 aa).

In terms of domain architecture, CAP-Gly spans 26–69 (GPVDTKAGMFAGVDLLANIGKNDGSFMGKKYFQTEYPQSGLFIQ). 2 positions are modified to phosphoserine: S95 and S110. Residues 108-157 (QFSPMDDPKSPTPMRSFRITSRHSGNQQSMDQEASDHHQQQEFGYDNRED) are disordered. Over residues 125–139 (RITSRHSGNQQSMDQ) the composition is skewed to polar residues. Basic and acidic residues predominate over residues 141–157 (ASDHHQQQEFGYDNRED). Residues 190 to 397 (NSSEVTIELR…AQAQTAVESL (208 aa)) are a coiled coil. The short motif at 416–429 (CEHCDTMGHNTAEC) is the CCHC-box element.

The protein localises to the cytoplasm. It is found in the cytoskeleton. The protein resides in the microtubule organizing center. It localises to the spindle pole body. Its subcellular location is the spindle. Its function is as follows. Required for nuclear fusion, chromosome disjunction, and nuclear segregation during mitosis. Probably required for the formation or stabilization of microtubules during mitosis and for spindle pole body fusion during conjugation. The chain is Nuclear fusion protein BIK1 (BIK1) from Saccharomyces cerevisiae (strain ATCC 204508 / S288c) (Baker's yeast).